The chain runs to 449 residues: MMLSTEGREGFVVKVRGLPWSCSAEEVMRFFSDCKIQNGTSGVRFIYTREGRPSGEAFVELESEDEVKLALKKDRETMGHRYVEVFKSNSVEMDWVLKHTGPNSPDTANDGFVRLRGLPFGCSKEEIVQFFSGLEIVPNGMTLPVDFQGRSTGEAFVQFASQEIAEKALKKHKERIGHRYIEIFKSSRAEVRTHYDPPRKLMTMQRPGPYDRPGAGRGYNSIGRGAGFERMRRGAYGGGYGGYDDYGGYNDGYGFGSDRFGRDLNYCFSGMSDHRYGDGGSSFQSTTGHCVHMRGLPYRATENDIYNFFSPLNPMRVHIEIGPDGRVTGEADVEFATHEDAVAAMAKDKANMQHRYVELFLNSTAGTSGGAYDHSYVELFLNSTAGASGGAYGSQMMGGMGLSNQSSYGGPASQQLSAGYGGGYGGQSSMSGYDQVLQENSSDYQSNLA.

Position 1 is an N-acetylmethionine (Met1). N-acetylmethionine; in Heterogeneous nuclear ribonucleoprotein H2, N-terminally processed is present on Met2. An RRM 1 domain is found at 11 to 90; sequence FVVKVRGLPW…RYVEVFKSNS (80 aa). Ser23 bears the Phosphoserine mark. A Glycyl lysine isopeptide (Lys-Gly) (interchain with G-Cter in SUMO2) cross-link involves residue Lys35. Residues Ser54 and Ser63 each carry the phosphoserine modification. Lys87 is covalently cross-linked (Glycyl lysine isopeptide (Lys-Gly) (interchain with G-Cter in SUMO2)). At Ser90 the chain carries Phosphoserine. Lys98 is covalently cross-linked (Glycyl lysine isopeptide (Lys-Gly) (interchain with G-Cter in SUMO2)). Residues 111–188 form the RRM 2 domain; it reads GFVRLRGLPF…RYIEIFKSSR (78 aa). Arg233 is subject to Dimethylated arginine; alternate. Arg233 carries the omega-N-methylarginine; alternate modification. Residues 234–249 form a 1-1 repeat; it reads GAYGGGYGGYDDYGGY. The 2 X 16 AA Gly-rich approximate repeats stretch occupies residues 234-433; that stretch reads GAYGGGYGGY…YGGQSSMSGY (200 aa). Tyr246 bears the Phosphotyrosine mark. The RRM 3 domain occupies 289–364; it reads HCVHMRGLPY…RYVELFLNST (76 aa). Phosphoserine is present on Ser310. 3 consecutive repeat copies span residues 354-372, 374-392, and 418-433. The segment at 354 to 392 is 2 X 19 AA perfect repeats; it reads HRYVELFLNSTAGTSGGAYDHSYVELFLNSTAGASGGAY.

As to quaternary structure, component of a ribonucleoprotein complex containing mRNAs and RNA-binding proteins including DDX5, HNRNPH2 and SRSF1 as well as splicing regulator ARVCF. Interacts with TXNL4/DIM1.

It localises to the nucleus. Its subcellular location is the nucleoplasm. In terms of biological role, this protein is a component of the heterogeneous nuclear ribonucleoprotein (hnRNP) complexes which provide the substrate for the processing events that pre-mRNAs undergo before becoming functional, translatable mRNAs in the cytoplasm. Binds poly(RG). In Rattus norvegicus (Rat), this protein is Heterogeneous nuclear ribonucleoprotein H2 (Hnrnph2).